The primary structure comprises 378 residues: Zinc transporter 7 (378 aa).

The Cytoplasmic segment spans residues 1–37; the sequence is MLPLSIKDDEYKPPKFNLFGKISGWFRSILSDKTSRN. A helical membrane pass occupies residues 38-58; it reads LFFFLCLNLSFAFVELLYGIW. Residues 59 to 67 are Lumenal-facing; it reads SNCLGLISD. The chain crosses the membrane as a helical span at residues 68–88; that stretch reads SFHMFFDSTAILAGLAASVIS. The Cytoplasmic portion of the chain corresponds to 89 to 102; it reads KWRDNDAFSYGYVR. The chain crosses the membrane as a helical span at residues 103–123; it reads AEVLAGFVNGLFLIFTAFFIF. Over 124–140 the chain is Lumenal; the sequence is SEGVERALAPPDVHHER. Residues 141–161 form a helical membrane-spanning segment; it reads LLLVSILGFVVNLVGIFVFNH. Positions 161–220 are his-rich loop; it reads HGGHGHSHGSGHGHSHSLFNGALDHSHGHEDHCHSHEAKHGAAHSHDHDHAHGHGHLHSH. Residues 162–238 are Cytoplasmic-facing; that stretch reads GGHGHSHGSG…AGPSRQILQG (77 aa). Residues 186 to 223 show a composition bias toward basic and acidic residues; sequence SHGHEDHCHSHEAKHGAAHSHDHDHAHGHGHLHSHDGP. Positions 186-224 are disordered; sequence SHGHEDHCHSHEAKHGAAHSHDHDHAHGHGHLHSHDGPS. Residues 239–259 form a helical membrane-spanning segment; it reads VFLHILADTLGSIGVIASAIM. The Lumenal portion of the chain corresponds to 260–264; sequence MQNFG. Residues 265 to 285 form a helical membrane-spanning segment; sequence LMIADPICSILIAILIVVSVI. At 286 to 378 the chain is on the cytoplasmic side; that stretch reads PLLRESVGIL…LYVQIDFAAM (93 aa).

Belongs to the cation diffusion facilitator (CDF) transporter (TC 2.A.4) family. SLC30A subfamily. In terms of assembly, homooligomer. As to expression, highly expressed in liver, spleen, duodenum and part of the jejunum of small intestine (at protein level). Moderately expressed in kidney, lung, and brain. Barely detectable in heart. In brain, expressed in cerebellum, cerebral cortex and hippocampus (at protein level).

It is found in the golgi apparatus membrane. The protein resides in the cytoplasmic vesicle. The protein localises to the golgi apparatus. Its subcellular location is the trans-Golgi network. It localises to the sarcoplasmic reticulum. It is found in the mitochondrion. It catalyses the reaction Zn(2+)(in) = Zn(2+)(out). Functionally, zinc ion transporter mediating zinc entry from the cytosol into the lumen of organelles along the secretory pathway. By contributing to zinc ion homeostasis within the early secretory pathway, regulates the activation and folding of enzymes like alkaline phosphatases. This chain is Zinc transporter 7, found in Mus musculus (Mouse).